The following is a 162-amino-acid chain: Small ribosomal subunit protein uS5 (162 aa).

One can recognise an S5 DRBM domain in the interval 11–74 (LTDRVVHISR…EQAKKNLIKV (64 aa)).

The protein belongs to the universal ribosomal protein uS5 family. As to quaternary structure, part of the 30S ribosomal subunit. Contacts proteins S4 and S8.

With S4 and S12 plays an important role in translational accuracy. In terms of biological role, located at the back of the 30S subunit body where it stabilizes the conformation of the head with respect to the body. In Pelobacter propionicus (strain DSM 2379 / NBRC 103807 / OttBd1), this protein is Small ribosomal subunit protein uS5.